The chain runs to 164 residues: Low molecular weight protein-tyrosine-phosphatase (164 aa).

The active-site Nucleophile is Cys-9. The active site involves Arg-15. The active-site Proton donor is Asp-128.

Belongs to the low molecular weight phosphotyrosine protein phosphatase family.

It carries out the reaction O-phospho-L-tyrosyl-[protein] + H2O = L-tyrosyl-[protein] + phosphate. Acts on tyrosine phosphorylated proteins, low-MW aryl phosphates and natural and synthetic acyl phosphates. May be involved in the regulation of sulfur amino acid metabolism. This chain is Low molecular weight protein-tyrosine-phosphatase (ptpA), found in Streptomyces coelicolor (strain ATCC BAA-471 / A3(2) / M145).